Here is a 173-residue protein sequence, read N- to C-terminus: Bilin biosynthesis protein PecF (173 aa).

This sequence belongs to the CpcE/RpcE/PecE family.

Functionally, an enzyme involved in the biosynthesis of bilin. This Nostoc sp. (strain PCC 7120 / SAG 25.82 / UTEX 2576) protein is Bilin biosynthesis protein PecF (pecF).